The primary structure comprises 1575 residues: Laminin subunit gamma-3 (1575 aa).

The N-terminal stretch at 1–19 (MAAAALLLGLALLAPRAAG) is a signal peptide. Residues 31–270 (RPQRCLPVFE…AVSDFSVGGR (240 aa)) enclose the Laminin N-terminal domain. N-linked (GlcNAc...) asparagine glycosylation is found at Asn-87 and Asn-119. Disulfide bonds link Cys-271/Cys-280, Cys-273/Cys-290, Cys-292/Cys-301, Cys-304/Cys-324, Cys-327/Cys-336, Cys-329/Cys-352, Cys-355/Cys-364, Cys-367/Cys-380, Cys-383/Cys-395, Cys-385/Cys-401, Cys-403/Cys-412, Cys-415/Cys-427, Cys-430/Cys-441, Cys-432/Cys-448, Cys-450/Cys-459, and Cys-462/Cys-477. 4 consecutive Laminin EGF-like domains span residues 271–326 (CKCN…ECLP), 327–382 (CNCS…PCQP), 383–429 (CDCQ…GCRP), and 430–479 (CTCN…GCSS). A glycan (N-linked (GlcNAc...) asparagine) is linked at Asn-295. An N-linked (GlcNAc...) asparagine glycan is attached at Asn-328. The Laminin EGF-like 5; first part domain maps to 480 to 489 (CFCYGHSKVC). The Laminin IV type A domain maps to 499-672 (HILSDFHQGA…LSPPASWVEI (174 aa)). N-linked (GlcNAc...) asparagine glycosylation occurs at Asn-631. The 34-residue stretch at 673–706 (CSCPTGYTGQFCESCAPGYKREMPQGGPYASCVP) folds into the Laminin EGF-like 5; second part domain. 24 disulfide bridges follow: Cys-707–Cys-715, Cys-709–Cys-722, Cys-724–Cys-733, Cys-736–Cys-752, Cys-755–Cys-763, Cys-757–Cys-774, Cys-777–Cys-786, Cys-789–Cys-807, Cys-810–Cys-824, Cys-812–Cys-831, Cys-834–Cys-843, Cys-846–Cys-863, Cys-866–Cys-880, Cys-868–Cys-887, Cys-889–Cys-898, Cys-901–Cys-914, Cys-917–Cys-929, Cys-919–Cys-936, Cys-938–Cys-947, Cys-950–Cys-962, Cys-965–Cys-977, Cys-967–Cys-983, Cys-985–Cys-994, and Cys-997–Cys-1010. Laminin EGF-like domains follow at residues 707–754 (CTCN…DCQP), 755–809 (CPCP…PCHQ), 810–865 (CQCS…KCMP), 866–916 (CSCH…GCRS), 917–964 (CKCH…GCRA), and 965–1013 (CRCS…CQQC). N-linked (GlcNAc...) asparagine glycosylation is present at Asn-837. Asn-980 is a glycosylation site (N-linked (GlcNAc...) asparagine). A domain II and I region spans residues 1014–1575 (PSCYALVKEE…SLPENCASWQ (562 aa)). Residues 1059–1061 (RGD) carry the Cell attachment site motif. The stretch at 1073–1134 (REAFLEQMMS…SEEEILHAAA (62 aa)) forms a coiled coil. Asn-1185 is a glycosylation site (N-linked (GlcNAc...) asparagine). The stretch at 1201–1228 (LETQRDLEDRYQEVQAAQKALRTAVAEV) forms a coiled coil. A disordered region spans residues 1378–1399 (KQAERMLGNAAPLSSSAKKKGR). Coiled coils occupy residues 1410-1492 (KLAK…LARL) and 1523-1567 (GSLQ…LHSL).

In terms of assembly, laminin is a complex glycoprotein, consisting of three different polypeptide chains (alpha, beta, gamma), which are bound to each other by disulfide bonds into a cross-shaped molecule comprising one long and three short arms with globules at each end. Gamma-3 is a subunit of laminin-12 (laminin-213), laminin-14 (laminin-423) and laminin-15 (laminin-523). Broadly expressed in: skin, heart, lung, and the reproductive tracts.

The protein localises to the secreted. The protein resides in the extracellular space. Its subcellular location is the extracellular matrix. It is found in the basement membrane. In terms of biological role, binding to cells via a high affinity receptor, laminin is thought to mediate the attachment, migration and organization of cells into tissues during embryonic development by interacting with other extracellular matrix components. The sequence is that of Laminin subunit gamma-3 (LAMC3) from Homo sapiens (Human).